We begin with the raw amino-acid sequence, 81 residues long: Antitoxin VapB20 (81 aa).

Functionally, antitoxin component of a type II toxin-antitoxin (TA) system. Neutralizes the toxic effect of cognate toxin VapC20. This chain is Antitoxin VapB20 (vapB20), found in Mycobacterium tuberculosis (strain CDC 1551 / Oshkosh).